The sequence spans 158 residues: Transcription elongation factor GreA (158 aa).

Positions 47–68 (AEYDAAKEAQGLLEMRIAKLEE) form a coiled coil.

Belongs to the GreA/GreB family.

Its function is as follows. Necessary for efficient RNA polymerase transcription elongation past template-encoded arresting sites. The arresting sites in DNA have the property of trapping a certain fraction of elongating RNA polymerases that pass through, resulting in locked ternary complexes. Cleavage of the nascent transcript by cleavage factors such as GreA or GreB allows the resumption of elongation from the new 3'terminus. GreA releases sequences of 2 to 3 nucleotides. The polypeptide is Transcription elongation factor GreA (Flavobacterium johnsoniae (strain ATCC 17061 / DSM 2064 / JCM 8514 / BCRC 14874 / CCUG 350202 / NBRC 14942 / NCIMB 11054 / UW101) (Cytophaga johnsonae)).